Here is a 238-residue protein sequence, read N- to C-terminus: Probable transcriptional regulatory protein SSU98_0387 (238 aa).

It belongs to the TACO1 family. YeeN subfamily.

It is found in the cytoplasm. The protein is Probable transcriptional regulatory protein SSU98_0387 of Streptococcus suis (strain 98HAH33).